The following is a 447-amino-acid chain: uncharacterized protein (447 aa).

Helical transmembrane passes span 380–400 (VLEI…LLLT) and 412–432 (ILGF…GVYV).

The protein localises to the cell membrane. This is an uncharacterized protein from Methanocaldococcus jannaschii (strain ATCC 43067 / DSM 2661 / JAL-1 / JCM 10045 / NBRC 100440) (Methanococcus jannaschii).